A 133-amino-acid chain; its full sequence is Phosphoribosyl-AMP cyclohydrolase (133 aa).

D82 is a binding site for Mg(2+). A Zn(2+)-binding site is contributed by C83. 2 residues coordinate Mg(2+): D84 and D86. Zn(2+) contacts are provided by C100 and C107.

Belongs to the PRA-CH family. In terms of assembly, homodimer. Requires Mg(2+) as cofactor. The cofactor is Zn(2+).

It is found in the cytoplasm. It carries out the reaction 1-(5-phospho-beta-D-ribosyl)-5'-AMP + H2O = 1-(5-phospho-beta-D-ribosyl)-5-[(5-phospho-beta-D-ribosylamino)methylideneamino]imidazole-4-carboxamide. Its pathway is amino-acid biosynthesis; L-histidine biosynthesis; L-histidine from 5-phospho-alpha-D-ribose 1-diphosphate: step 3/9. Catalyzes the hydrolysis of the adenine ring of phosphoribosyl-AMP. The polypeptide is Phosphoribosyl-AMP cyclohydrolase (Aromatoleum aromaticum (strain DSM 19018 / LMG 30748 / EbN1) (Azoarcus sp. (strain EbN1))).